The primary structure comprises 405 residues: Acetate kinase (405 aa).

A Mg(2+)-binding site is contributed by asparagine 7. Residue lysine 14 coordinates ATP. Arginine 99 contacts substrate. Aspartate 156 serves as the catalytic Proton donor/acceptor. Residues 215–219, 290–292, and 338–342 each bind ATP; these read HLGNG, DMR, and GVGEH. Glutamate 391 contacts Mg(2+).

The protein belongs to the acetokinase family. Homodimer. Requires Mg(2+) as cofactor. It depends on Mn(2+) as a cofactor.

Its subcellular location is the cytoplasm. It carries out the reaction acetate + ATP = acetyl phosphate + ADP. The protein operates within metabolic intermediate biosynthesis; acetyl-CoA biosynthesis; acetyl-CoA from acetate: step 1/2. In terms of biological role, catalyzes the formation of acetyl phosphate from acetate and ATP. Can also catalyze the reverse reaction. This chain is Acetate kinase, found in Nostoc punctiforme (strain ATCC 29133 / PCC 73102).